The following is a 332-amino-acid chain: Ferredoxin--NADP reductase (332 aa).

Residues glutamate 35, glutamine 43, tyrosine 48, valine 88, phenylalanine 122, aspartate 286, and serine 326 each coordinate FAD.

Belongs to the ferredoxin--NADP reductase type 2 family. Homodimer. The cofactor is FAD.

It carries out the reaction 2 reduced [2Fe-2S]-[ferredoxin] + NADP(+) + H(+) = 2 oxidized [2Fe-2S]-[ferredoxin] + NADPH. This is Ferredoxin--NADP reductase from Limosilactobacillus reuteri (strain DSM 20016) (Lactobacillus reuteri).